A 201-amino-acid chain; its full sequence is Extracellular superoxide dismutase [Cu-Zn] (201 aa).

The signal sequence occupies residues 1–42; sequence MINSFIVIFLSFLIFINYANLVCVEATHVYGRRSHSNGMHGN. Cu cation contacts are provided by H89, H91, and H106. C100 and C192 form a disulfide bridge. Zn(2+) contacts are provided by H106, H114, H123, and D126. H163 is a Cu cation binding site.

Belongs to the Cu-Zn superoxide dismutase family. As to quaternary structure, homodimer. It depends on Cu cation as a cofactor. Zn(2+) serves as cofactor.

It localises to the secreted. It is found in the extracellular space. It carries out the reaction 2 superoxide + 2 H(+) = H2O2 + O2. Destroys radicals which are normally produced within the cells and which are toxic to biological systems. May act in the parasite defense against phagocyte-generated reactive oxygen species. The protein is Extracellular superoxide dismutase [Cu-Zn] (sod-4) of Onchocerca volvulus.